A 440-amino-acid chain; its full sequence is Trigger factor (440 aa).

The region spanning 160–253 (KDTVIGDALR…VTEVKRLELP (94 aa)) is the PPIase FKBP-type domain.

Belongs to the FKBP-type PPIase family. Tig subfamily.

The protein resides in the cytoplasm. The catalysed reaction is [protein]-peptidylproline (omega=180) = [protein]-peptidylproline (omega=0). In terms of biological role, involved in protein export. Acts as a chaperone by maintaining the newly synthesized protein in an open conformation. Functions as a peptidyl-prolyl cis-trans isomerase. This is Trigger factor from Chlorobium chlorochromatii (strain CaD3).